The chain runs to 513 residues: MAKSIMIQGTMSSAGKSLLVTALCRILKQDGYKVAPFKSQNMALNSFITEDGYEMGRAQVVQAEAAGIKPSVLMNPILLKPTTDVGSQVIVNGEVRGNMTASNYFKYKKELIPEIMHSYQTLDKEYDIIVIEGAGSPAEINLKSEDIVNMGMARMANAPVLLVGDIDRGGVFAQLYGTVALLEEEERAMIKGMIINKFRGDVKILEPGLTMLSDRLSPIANIPFVGVVPYTTVDIEEEDSISERFLRKTAKKIDIAVIRLPRISNYTDFHNLERFPNVSVRYISKVSELLEPDMIILPGTKNTIDDLKFLRESGLEAAILKAESKDTLIFGICGGYQMLGEWLHDPYGVEGGGEIKGLSLLPINTVFAKEKVRKQNSGTLNKVAGMLSGLSGKTYQGYEIHMGESTWSSKVEEEKNNCFSNKDEENLEHNTITSVLISNGAHVYGTYLHGIFDEEGICKEIIGTLCKRKGIDFEEVYEFDYKQYKEEQYDKLADAVRSSLDMKKIYQIMEEGV.

In terms of domain architecture, GATase cobBQ-type spans 252–457; it reads KIDIAVIRLP…LHGIFDEEGI (206 aa). The Nucleophile role is filled by C333. Residue H449 is part of the active site.

Belongs to the CobB/CobQ family. CobQ subfamily.

Its pathway is cofactor biosynthesis; adenosylcobalamin biosynthesis. Catalyzes amidations at positions B, D, E, and G on adenosylcobyrinic A,C-diamide. NH(2) groups are provided by glutamine, and one molecule of ATP is hydrogenolyzed for each amidation. In Lachnoclostridium phytofermentans (strain ATCC 700394 / DSM 18823 / ISDg) (Clostridium phytofermentans), this protein is Cobyric acid synthase.